The sequence spans 214 residues: Imidazole glycerol phosphate synthase subunit HisH (214 aa).

Positions 2–214 (RVALIDYGSG…LIANFLRWAP (213 aa)) constitute a Glutamine amidotransferase type-1 domain. The active-site Nucleophile is the Cys88. Active-site residues include His194 and Glu196.

As to quaternary structure, heterodimer of HisH and HisF.

Its subcellular location is the cytoplasm. The enzyme catalyses 5-[(5-phospho-1-deoxy-D-ribulos-1-ylimino)methylamino]-1-(5-phospho-beta-D-ribosyl)imidazole-4-carboxamide + L-glutamine = D-erythro-1-(imidazol-4-yl)glycerol 3-phosphate + 5-amino-1-(5-phospho-beta-D-ribosyl)imidazole-4-carboxamide + L-glutamate + H(+). The catalysed reaction is L-glutamine + H2O = L-glutamate + NH4(+). Its pathway is amino-acid biosynthesis; L-histidine biosynthesis; L-histidine from 5-phospho-alpha-D-ribose 1-diphosphate: step 5/9. Functionally, IGPS catalyzes the conversion of PRFAR and glutamine to IGP, AICAR and glutamate. The HisH subunit catalyzes the hydrolysis of glutamine to glutamate and ammonia as part of the synthesis of IGP and AICAR. The resulting ammonia molecule is channeled to the active site of HisF. The protein is Imidazole glycerol phosphate synthase subunit HisH of Rhodospirillum rubrum (strain ATCC 11170 / ATH 1.1.1 / DSM 467 / LMG 4362 / NCIMB 8255 / S1).